Consider the following 609-residue polypeptide: Membrane-bound O-acyltransferase GUP2 (609 aa).

Positions 1–18 (MSMLRIWSCIVHFFSVQA) are cleaved as a signal peptide. The Lumenal portion of the chain corresponds to 19-75 (LDSRIKPDIEFKRRQRIFINSSKEENGSSSSAVTVTRNPVLSSNSPSPPLWNTWEFR). Residues 76-96 (LYYLAFTVVVPFMIKAALATS) form a helical membrane-spanning segment. Topologically, residues 97–133 (SESNPNYYKFSGLLAHGWILGRKVDNSDPQYRFFRSN) are cytoplasmic. Residues 134-154 (FFLLAILILLQIILKKVFVKF) form a helical membrane-spanning segment. Over 155–169 (SKIPKTKFDFACGLV) the chain is Lumenal. A helical transmembrane segment spans residues 170–190 (FVCFMYGINSVKLFTHAFIFF). Over 191–200 (TLAHSLKRKR) the chain is Cytoplasmic. Residues 201-221 (LIAAFAIWSYGIFTLFINQKM) form a helical membrane-spanning segment. Topologically, residues 222 to 324 (KNLPFNNIAI…VAEHHIQDYN (103 aa)) are lumenal. Residues 325–345 (FINFIAYITYAPLFLVGPIIT) traverse the membrane as a helical segment. At 346 to 371 (FNDYLYQSENKLPSLTKKNIGFYALK) the chain is on the cytoplasmic side. The chain crosses the membrane as a helical span at residues 372–392 (VFSSLLLMEIILHYIYVGAIA). Residues 393-406 (RTKAWNNDTPLQQA) are Lumenal-facing. A helical membrane pass occupies residues 407–427 (MIALFNLNIMYLKLLIPWRLF). Residues 428–474 (RLWAMVDGIDAPENMLRCVDNNYSTVGFWRAWHTSFNKWVIRYIYVP) lie on the Cytoplasmic side of the membrane. Residues 475 to 495 (FGGSNNKILTSFAVFSFVAIW) form a helical membrane-spanning segment. Histidine 496 is an active-site residue. Topologically, residues 496-502 (HDIQLRV) are lumenal. The chain crosses the membrane as a helical span at residues 503-523 (LFWGWLTVLLLLGETYITNCF). Topologically, residues 524-533 (SRYRFRSWYR) are cytoplasmic. The chain crosses the membrane as a helical span at residues 534 to 554 (FVCGIGAAINICMMMIINVYG). The Lumenal segment spans residues 555 to 575 (FCLGAEGTKLLLKGIFNNSHS). A helical membrane pass occupies residues 576 to 596 (PEFLTAVMVSLFIAVQVMFEI). Residues 597 to 609 (REEEKRHGINLKC) are Cytoplasmic-facing.

The protein belongs to the membrane-bound acyltransferase family.

The protein resides in the endoplasmic reticulum membrane. Its function is as follows. Probable membrane-bound O-acyltransferase. Together with GUP1, has an influence on the chemical composition of the yeast extracellular matrix (yECM) in yeast multicellular aggregates, such as biofilms and colonies. This is Membrane-bound O-acyltransferase GUP2 (GUP2) from Saccharomyces cerevisiae (strain ATCC 204508 / S288c) (Baker's yeast).